Reading from the N-terminus, the 204-residue chain is MNSVVLLLSVVCLGVSSQQITDSQRLFSIAVNRVTHLHLLAQRLFSDFESSLQTEEQRQLNKIFLQDFCNSDYIISPIDKHETQRSSVLKLLSISYGLVESWEFPSRSLSGGSSLRNQISPRLSELKTGILLLIRANQDEAENYPDTDTLQHAPYGNYYQSLGGNESLRQTYELLACFKKDMHKVETYLTVAKCRLSPEANCTL.

The signal sequence occupies residues 1-17; it reads MNSVVLLLSVVCLGVSS. At glutamine 18 the chain carries Pyrrolidone carboxylic acid. Histidine 36 lines the Zn(2+) pocket. Cysteine 69 and cysteine 177 form a disulfide bridge. Glutamate 186 provides a ligand contact to Zn(2+). Cysteine 194 and cysteine 202 are disulfide-bonded.

The protein belongs to the somatotropin/prolactin family.

It localises to the secreted. Growth hormone plays an important role in growth control and involved in the regulation of several anabolic processes. This Oreochromis niloticus (Nile tilapia) protein is Somatotropin (gh).